The chain runs to 1161 residues: Nuclear receptor-interacting protein 1 (1161 aa).

An interaction with ZNF366 region spans residues 1–416 (MTHGEELGSD…FESSTPTTID (416 aa)). An LXXLL motif 1 motif is present at residues 21–25 (LEGLL). Positions 34 to 68 (GTAINKKSAGHKEEDQNFNLSGSAFPSCQSNGPTV) are disordered. The segment covering 50–68 (NFNLSGSAFPSCQSNGPTV) has biased composition (polar residues). The interval 78 to 335 (MLHLKKARLL…LNGQARALPA (258 aa)) is repression domain 1. Serine 104 carries the phosphoserine modification. The residue at position 111 (lysine 111) is an N6-acetyllysine; alternate. Lysine 111 participates in a covalent cross-link: Glycyl lysine isopeptide (Lys-Gly) (interchain with G-Cter in SUMO2); alternate. An LXXLL motif 2 motif is present at residues 133 to 137 (LASLL). Position 158 is an N6-acetyllysine (lysine 158). Residue lysine 170 forms a Glycyl lysine isopeptide (Lys-Gly) (interchain with G-Cter in SUMO2) linkage. The LXXLL motif 3 motif lies at 185-189 (LKTLL). Glycyl lysine isopeptide (Lys-Gly) (interchain with G-Cter in SUMO2) cross-links involve residues lysine 195 and lysine 198. Phosphothreonine is present on threonine 207. A Phosphoserine modification is found at serine 218. Positions 267 to 271 (LALLL) match the LXXLL motif 4 motif. N6-acetyllysine occurs at positions 287 and 311. Phosphoserine is present on serine 358. Lysine 374 participates in a covalent cross-link: Glycyl lysine isopeptide (Lys-Gly) (interchain with G-Cter in SUMO2). Serine 380 carries the phosphoserine modification. Positions 382 to 386 (LLHLL) match the LXXLL motif 5 motif. The disordered stretch occupies residues 393–436 (TPMNGHSQNERASSFESSTPTTIDEYSDNNPSFTDDSSGDESSY). The repression domain 2 stretch occupies residues 411-701 (TPTTIDEYSD…PAGPEPGLPG (291 aa)). The tract at residues 432 to 473 (DESSYSNCVPIDLSCKHRIEKPEAERPVSLENLTQSLLNTWD) is required for targeting to small nuclear foci. A CTBP-binding; principal site motif is present at residues 441–447 (PIDLSCK). Lysine 447 and lysine 482 each carry N6-acetyllysine. At serine 488 the chain carries Phosphoserine. An LXXLL motif 6 motif is present at residues 501-505 (LLQLL). Residue lysine 509 forms a Glycyl lysine isopeptide (Lys-Gly) (interchain with G-Cter in SUMO2) linkage. Residues 517–552 (NASPQDIHSDGTKFSPQNYTRTSVIESPSTNRTTPV) are compositionally biased toward polar residues. Positions 517–559 (NASPQDIHSDGTKFSPQNYTRTSVIESPSTNRTTPVSTPPLYT) are disordered. Position 519 is a phosphoserine (serine 519). Lysine 529 carries the N6-acetyllysine modification. 3 positions are modified to phosphoserine: serine 531, serine 543, and serine 565. The CTBP-binding signature appears at 566-570 (PINLS). 3 disordered regions span residues 604–623 (TKGKESQAEKPAPSEGAQNS), 639–702 (GLQS…LPGC), and 717–747 (LLGNSSKGKNEKKEKTPARDEAPQEHSERAA). Lysine 607 is modified (N6-acetyllysine). Serine 672 bears the Phosphoserine mark. An LXXLL motif 7 motif is present at residues 714-718 (LQLLL). A compositionally biased stretch (basic and acidic residues) spans 724 to 747 (GKNEKKEKTPARDEAPQEHSERAA). The segment at 736–886 (DEAPQEHSER…TAVDTANHHS (151 aa)) is repression domain 3. An interaction with ZNF366 region spans residues 754–1161 (VKIKSEPCDD…NALTIKKESE (408 aa)). Glycyl lysine isopeptide (Lys-Gly) (interchain with G-Cter in SUMO2) cross-links involve residues lysine 757 and lysine 803. Serine 808 carries the post-translational modification Phosphoserine. An LXXLL motif 8 motif is present at residues 820–824 (LSRLL). Positions 829 to 848 (ESYPADEQDKSHRNSELPTL) are disordered. Glycyl lysine isopeptide (Lys-Gly) (interchain with G-Cter in SUMO2) cross-links involve residues lysine 851 and lysine 902. N6-acetyllysine; alternate is present on lysine 932. Lysine 932 is covalently cross-linked (Glycyl lysine isopeptide (Lys-Gly) (interchain with G-Cter in SUMO2); alternate). Residues 937–941 (LKQLL) carry the LXXLL motif 9 motif. Residues 947–951 (VRDLS) carry the CTBP-binding motif. A compositionally biased stretch (basic and acidic residues) spans 950 to 962 (LSPHRSDSVPDTK). The interval 950–976 (LSPHRSDSVPDTKKKGHKNNAPGSKPE) is disordered. Serine 1003 carries the phosphoserine modification. Residues 1063-1076 (LTKTNPILYYMLQK) are ligand-dependent nuclear receptor binding. Residues lysine 1108, lysine 1118, and lysine 1157 each participate in a glycyl lysine isopeptide (Lys-Gly) (interchain with G-Cter in SUMO2) cross-link. The tract at residues 1121 to 1161 (FFNLRSPYNSHMGNNASRPHSTNGEVYGLLGNALTIKKESE) is repression domain 4.

In terms of assembly, interacts with CTBP1, CTBP2, ERS1, HDAC1, HDAC2, HDAC5, HDAC6, NR2C2, NR3C1, NR3C2, YWHAH, JUN and FOS. Found in a complex with both NR3C1 and YWHAH. Interacts with NR2C1 (sumoylated form and via the ligand-binding domain); the interaction results in promoting the repressor activity of NR2C1. Interacts with RARA and RXRB homodimers and RARA/RXRB heterodimers in the presence of ligand. Interacts with HDAC1 and HDAC3 via its N-terminal domain. Interacts with ZNF366. Interacts with RORA. Acetylation abolishes interaction with CTBP1. Phosphorylation enhances interaction with YWHAH. Acetylation regulates its nuclear translocation and corepressive activity. Expressed in the embryonic placenta. In the adult, expression is strong in the testis and brain. Also expressed at a high level in the white adipose tissue. Expressed constantly but at a weaker level in the adult heart, lung, stomach and kidney. Expressed moderately in the skeletal muscle. Expressed at a low level in the adult spleen, liver and brown adipose tissue. Expressed in the ovary at a high level in granulosa cells and at a lower level in the thecal and interstitial compartments.

It localises to the nucleus. In terms of biological role, modulates transcriptional repression by nuclear hormone receptors such as NR2C1, thyroid hormone receptor and retinoic acid receptor/RARA. Essential for cumulus expansion and follicle rupture during ovulation. Also controls the balance between fat accumulation and energy expenditure. Positive regulator of the circadian clock gene expression: stimulates transcription of BMAL1, CLOCK and CRY1 by acting as a coactivator for RORA and RORC. Involved in the regulation of ovarian function. Plays a role in renal development. This chain is Nuclear receptor-interacting protein 1, found in Mus musculus (Mouse).